The primary structure comprises 33 residues: Cytochrome b6-f complex subunit 8 (33 aa).

Residues 2 to 22 (LISLGWAALAATFTFSIAMVV) form a helical membrane-spanning segment.

Belongs to the PetN family. The 4 large subunits of the cytochrome b6-f complex are cytochrome b6, subunit IV (17 kDa polypeptide, PetD), cytochrome f and the Rieske protein, while the 4 small subunits are PetG, PetL, PetM and PetN. The complex functions as a dimer.

Its subcellular location is the cellular thylakoid membrane. In terms of biological role, component of the cytochrome b6-f complex, which mediates electron transfer between photosystem II (PSII) and photosystem I (PSI), cyclic electron flow around PSI, and state transitions. This Synechococcus sp. (strain RCC307) protein is Cytochrome b6-f complex subunit 8.